The following is a 120-amino-acid chain: Holo-[acyl-carrier-protein] synthase (120 aa).

Mg(2+) is bound by residues D8 and E58.

The protein belongs to the P-Pant transferase superfamily. AcpS family. Mg(2+) is required as a cofactor.

The protein localises to the cytoplasm. It catalyses the reaction apo-[ACP] + CoA = holo-[ACP] + adenosine 3',5'-bisphosphate + H(+). Functionally, transfers the 4'-phosphopantetheine moiety from coenzyme A to a Ser of acyl-carrier-protein. In Streptococcus sanguinis (strain SK36), this protein is Holo-[acyl-carrier-protein] synthase.